A 156-amino-acid polypeptide reads, in one-letter code: Small ribosomal subunit protein uS7 (156 aa).

This sequence belongs to the universal ribosomal protein uS7 family. In terms of assembly, part of the 30S ribosomal subunit. Contacts proteins S9 and S11.

In terms of biological role, one of the primary rRNA binding proteins, it binds directly to 16S rRNA where it nucleates assembly of the head domain of the 30S subunit. Is located at the subunit interface close to the decoding center, probably blocks exit of the E-site tRNA. This is Small ribosomal subunit protein uS7 from Streptococcus uberis (strain ATCC BAA-854 / 0140J).